The chain runs to 70 residues: Palustrin-2ISa (70 aa).

The first 22 residues, 1-22 (MFTLKKSLLLLFFLGTISLSLC), serve as a signal peptide directing secretion. Residues 23–39 (EQERSAEDEGEVIEEEV) constitute a propeptide, removed in mature form. The cysteines at positions 64 and 70 are disulfide-linked.

Expressed by the skin glands.

The protein localises to the secreted. Functionally, has antimicrobial activity against Gram-negative bacterium E.coli ATCC 8739 (MIC=100 ug), against Gram positive bacteria S.aureus ATCC 6538 (MIC=25 ug), methicillin-resistant S.aureus ATCC 43300 (MIC=100 ug), B.subtilis ATCC 6633 (MIC=12.5 ug) and against fungus C.albicans ATCC 90028 (MIC=100 ug). The polypeptide is Palustrin-2ISa (Odorrana ishikawae (Ishikawa's frog)).